Consider the following 185-residue polypeptide: Ribosome-recycling factor (185 aa).

Belongs to the RRF family.

The protein localises to the cytoplasm. Its function is as follows. Responsible for the release of ribosomes from messenger RNA at the termination of protein biosynthesis. May increase the efficiency of translation by recycling ribosomes from one round of translation to another. The sequence is that of Ribosome-recycling factor from Streptococcus gordonii (strain Challis / ATCC 35105 / BCRC 15272 / CH1 / DL1 / V288).